Here is a 213-residue protein sequence, read N- to C-terminus: Superoxide dismutase [Fe] (213 aa).

Fe cation contacts are provided by His28, His82, Asp164, and His168.

This sequence belongs to the iron/manganese superoxide dismutase family. In terms of assembly, homotetramer. It depends on Fe cation as a cofactor.

The catalysed reaction is 2 superoxide + 2 H(+) = H2O2 + O2. In terms of biological role, destroys superoxide anion radicals which are normally produced within the cells and which are toxic to biological systems. The protein is Superoxide dismutase [Fe] (sodB) of Aquifex pyrophilus.